Reading from the N-terminus, the 359-residue chain is Protein disulfide-isomerase tigA (359 aa).

Positions 1–19 (MVRLSNLVSCLGLASAVTA) are cleaved as a signal peptide. Thioredoxin domains are found at residues 20 to 129 (AVVD…EKTG) and 131 to 250 (KPRG…EKTG). Residues cysteine 49, cysteine 52, cysteine 169, and cysteine 172 each act as nucleophile in the active site. 2 cysteine pairs are disulfide-bonded: cysteine 49-cysteine 52 and cysteine 169-cysteine 172. A Prevents secretion from ER motif is present at residues 356-359 (KDEL).

The protein belongs to the protein disulfide isomerase family.

It localises to the endoplasmic reticulum lumen. The catalysed reaction is Catalyzes the rearrangement of -S-S- bonds in proteins.. The protein is Protein disulfide-isomerase tigA (tigA) of Aspergillus niger.